The primary structure comprises 81 residues: Cytotoxin 3 (81 aa).

The first 21 residues, 1–21 (MKTLLLTLVVVTIVCLDLGYT), serve as a signal peptide directing secretion. 4 disulfide bridges follow: cysteine 24/cysteine 42, cysteine 35/cysteine 59, cysteine 63/cysteine 74, and cysteine 75/cysteine 80.

This sequence belongs to the three-finger toxin family. Short-chain subfamily. Type IA cytotoxin sub-subfamily. In terms of assembly, monomer in solution; Homodimer and oligomer in the presence of negatively charged lipids forming a pore with a size ranging between 20 and 30 Angstroms. Interacts with Kv channel-interacting protein 1 (KCNIP1) in a calcium-independent manner. Expressed by the venom gland.

It localises to the secreted. It is found in the target cell membrane. Basic protein that binds to cell membrane and depolarizes cardiomyocytes. This cytotoxin also possesses lytic activity on many other cells, including red blood cells. Interaction with sulfatides in the cell membrane induces pore formation and cell internalization. Cytotoxicity is due to pore formation, and to another mechanism independent of membrane-damaging activity. When internalized, it targets the mitochondrial membrane and induces mitochondrial swelling and fragmentation. It inhibits protein kinases C. It binds to the integrin alpha-V/beta-3 (ITGAV/ITGB3) with a moderate affinity. It also binds with high affinity to heparin. The polypeptide is Cytotoxin 3 (Naja atra (Chinese cobra)).